Consider the following 622-residue polypeptide: DNA mismatch repair protein MutL (622 aa).

This sequence belongs to the DNA mismatch repair MutL/HexB family.

Functionally, this protein is involved in the repair of mismatches in DNA. It is required for dam-dependent methyl-directed DNA mismatch repair. May act as a 'molecular matchmaker', a protein that promotes the formation of a stable complex between two or more DNA-binding proteins in an ATP-dependent manner without itself being part of a final effector complex. This chain is DNA mismatch repair protein MutL, found in Phenylobacterium zucineum (strain HLK1).